A 210-amino-acid chain; its full sequence is Thymidylate kinase (210 aa).

11-18 serves as a coordination point for ATP; that stretch reads GLEGAGKS.

The protein belongs to the thymidylate kinase family.

The enzyme catalyses dTMP + ATP = dTDP + ADP. Phosphorylation of dTMP to form dTDP in both de novo and salvage pathways of dTTP synthesis. The chain is Thymidylate kinase from Histophilus somni (strain 129Pt) (Haemophilus somnus).